We begin with the raw amino-acid sequence, 355 residues long: Lipopolysaccharide heptosyltransferase 1 (355 aa).

ADP-L-glycero-beta-D-manno-heptose contacts are provided by T186, T187, K191, E221, D260, T261, G262, and H265.

It belongs to the glycosyltransferase 9 family.

The protein resides in the cell inner membrane. It catalyses the reaction an alpha-Kdo-(2-&gt;4)-alpha-Kdo-(2-&gt;6)-lipid A + ADP-L-glycero-beta-D-manno-heptose = an L-alpha-D-Hep-(1-&gt;5)-[alpha-Kdo-(2-&gt;4)]-alpha-Kdo-(2-&gt;6)-lipid A + ADP + H(+). The protein operates within bacterial outer membrane biogenesis; LPS core biosynthesis. Its function is as follows. Glycosyltransferase involved in the biosynthesis of the core oligosaccharide region of lipopolysaccharide (LPS). Catalyzes the addition of the first heptose unit to one 3-deoxy-D-manno-octulosonic acid (Kdo) residue of the Kdo2-lipid A module. The polypeptide is Lipopolysaccharide heptosyltransferase 1 (Pseudomonas aeruginosa (strain ATCC 15692 / DSM 22644 / CIP 104116 / JCM 14847 / LMG 12228 / 1C / PRS 101 / PAO1)).